Here is a 1012-residue protein sequence, read N- to C-terminus: RAS protein activator like-3 (1012 aa).

Disordered stretches follow at residues 1–128 (MDPP…TPDV), 147–196 (GNED…QIHN), and 208–229 (KKAKSELGASASRDGPPSALGS). A compositionally biased stretch (polar residues) spans 7 to 21 (SRASQTQPVAPSPLT). At Ser-18 the chain carries Phosphoserine. Over residues 27–39 (SGGGAEKGAGGFR) the composition is skewed to gly residues. Residues 50 to 62 (QSHQETTASSQPA) are compositionally biased toward polar residues. Position 51 is a phosphoserine (Ser-51). A compositionally biased stretch (acidic residues) spans 100–113 (SEPEPENPEPEPEL). Phosphoserine occurs at positions 160, 162, 163, and 166. Over residues 160–171 (SASSESSIHVAS) the composition is skewed to low complexity. Residues 175 to 186 (KDPDRTPGKTDP) show a composition bias toward basic and acidic residues. The PH domain maps to 193–294 (QIHNVRGLLK…WIEDLRRHFQ (102 aa)). A phosphoserine mark is found at Ser-212, Ser-225, Ser-229, and Ser-232. Thr-235 carries the post-translational modification Phosphothreonine. A C2 domain is found at 285–405 (WIEDLRRHFQ…APAAGLERWF (121 aa)). Positions 475–683 (GRAQALVTDL…PAMQHFLDQV (209 aa)) constitute a Ras-GAP domain. The segment at 752 to 887 (PAPRTQGHSS…DKDQALGTHR (136 aa)) is disordered. Phosphoserine is present on residues Ser-788 and Ser-791. The segment covering 826 to 841 (PARRRPSAGPRPRPKG) has biased composition (basic residues). A coiled-coil region spans residues 889–989 (VGKLAELQCE…KDTIQNLQLL (101 aa)). The segment covering 990 to 999 (PRTSESQSQP) has biased composition (polar residues). The segment at 990-1012 (PRTSESQSQPVPLKAPCINGDTT) is disordered.

Its subcellular location is the cytoplasm. The protein localises to the cell cortex. In terms of biological role, functions as a Ras GTPase-activating protein. Plays an important role in the expansion and functions of natural killer T (NKT) cells in the liver by negatively regulating RAS activity and the down-stream ERK signaling pathway. The protein is RAS protein activator like-3 (RASAL3) of Bos taurus (Bovine).